The sequence spans 249 residues: MAGHSQFKNIMHRKGGQDAKRAQLFTKLAREITVSAKLGSPDPNANPRLRAAILAARAQSLPKDNIQRAIDKATSGGDAANLEELRYEGYGPGNVAVIVECLTDNRNRTASEVRTAFSKNGGTMGESGSVAFNFERVGLIHYPLKAGAADAVLDAGIEAGADDVQSSEDGHDITCRPDDLNAVSKALEAALGDPEFARLDWKPLVQVPVDADTVPALMKFLDILDDCDDVQRVAANYEIDDAIMEKLGA.

This sequence belongs to the TACO1 family.

Its subcellular location is the cytoplasm. The sequence is that of Probable transcriptional regulatory protein Rru_A1086 from Rhodospirillum rubrum (strain ATCC 11170 / ATH 1.1.1 / DSM 467 / LMG 4362 / NCIMB 8255 / S1).